The chain runs to 365 residues: Large ribosomal subunit protein uL3 (365 aa).

The segment at 343–365 (RPPKKKPPVQRPQITYVSVESKQ) is disordered. Residues 354–365 (PQITYVSVESKQ) are compositionally biased toward polar residues.

This sequence belongs to the universal ribosomal protein uL3 family. Part of the 50S ribosomal subunit. Forms a cluster with proteins L14 and L24e.

One of the primary rRNA binding proteins, it binds directly near the 3'-end of the 23S rRNA, where it nucleates assembly of the 50S subunit. This chain is Large ribosomal subunit protein uL3, found in Pyrococcus furiosus (strain ATCC 43587 / DSM 3638 / JCM 8422 / Vc1).